A 562-amino-acid polypeptide reads, in one-letter code: MAGRPGYSEVIFLYVVSVAVIARATDNMPVNKDVSKLFPLTLIHINDLHARFEETNMKSNVCTQKDQCIAGIARVYQKIKDLLKEYESKNPIYLNAGDNFQGTLWYNLLRWNVTADFIKKLKPAAMTLGNHEFDHTPKGLAPYLAELNKEGIPTIVANLVMNNDPDLKSSKIPKSIKLTVGKRKIGIIGVLYDKTHEIAQTGKVTLSNAVEAVRREAAALKKDNIDIIVVLSHCSYEEDKKIAAEAGDDIDVIVGAHSHSFLYSPDSKQPHDPKDKVEGPYPTLVESKNKRKIPIVQAKSFGKYVGRLTLYFDEEGEVKNWEGYPVFIDHKVQQDPQILKDLVPWRAKVEAIGSTVVGETMIELDRDSCRDQECTLGVLYADGFADQYTNDTFRPFAIIQAGNFRNPIKVGKITNGDIIEAAPFGSTADLIRLKGADIWDVAEHSFALDDEGRTNCLQVSGLRIVIDISKPVRSRVKKIEVMDYTNPKSDKLKPLDKEAEYYIVVPSYLADGKDGFSAMKRATARRTGPLDSDVFKNYVEKIKKVDNLKLGRVIVCKGSKCT.

The first 24 residues, 1–24 (MAGRPGYSEVIFLYVVSVAVIARA), serve as a signal peptide directing secretion. Positions 47, 49, and 98 each coordinate a divalent metal cation. Asn-112 carries N-linked (GlcNAc...) asparagine glycosylation. Asn-130, His-233, and His-257 together coordinate a divalent metal cation. Arg-370 is a binding site for AMP. Asn-390 carries an N-linked (GlcNAc...) asparagine glycan. Residues Arg-405, Phe-424, and Asp-514 each coordinate AMP.

This sequence belongs to the 5'-nucleotidase family. In terms of assembly, (Microbial infection) Interacts with Zika virus envelope protein E and Zika virus-like particles; the interaction does not affect Zika virus replication in human endothelial cells and keratinocytes. A divalent metal cation is required as a cofactor. The N-terminus is blocked. Female saliva (at protein level). Female salivary gland (at protein level). Not detected or low-level expression in female carcasses without salivary glands. Not detected in male tissues.

Its subcellular location is the secreted. It catalyses the reaction a ribonucleoside 5'-triphosphate + 2 H2O = a ribonucleoside 5'-phosphate + 2 phosphate + 2 H(+). In terms of biological role, facilitates hematophagy by preventing ADP-, collagen- and thrombin-dependent platelet aggregation in the host. Cleaves adenosine triphosphate (ATP) and adenosine diphosphate (ADP) to adenosine monophosphate (AMP) and inorganic phosphate. May reduce probing time by facilitating the speed of locating blood. (Microbial infection) Does not affect Zika virus replication in human endothelial cells and keratinocytes. The sequence is that of Apyrase from Aedes aegypti (Yellowfever mosquito).